A 412-amino-acid polypeptide reads, in one-letter code: Histidinol dehydrogenase (412 aa).

Residues Tyr118, Gln176, and Asn199 each coordinate NAD(+). 3 residues coordinate substrate: Thr222, Gln244, and His247. 2 residues coordinate Zn(2+): Gln244 and His247. Residues Glu311 and His312 each act as proton acceptor in the active site. Residues His312, Asp345, Glu399, and His404 each contribute to the substrate site. Asp345 contacts Zn(2+). Residue His404 coordinates Zn(2+).

This sequence belongs to the histidinol dehydrogenase family. Zn(2+) is required as a cofactor.

The enzyme catalyses L-histidinol + 2 NAD(+) + H2O = L-histidine + 2 NADH + 3 H(+). It participates in amino-acid biosynthesis; L-histidine biosynthesis; L-histidine from 5-phospho-alpha-D-ribose 1-diphosphate: step 9/9. Its function is as follows. Catalyzes the sequential NAD-dependent oxidations of L-histidinol to L-histidinaldehyde and then to L-histidine. This chain is Histidinol dehydrogenase, found in Thermus thermophilus (strain ATCC BAA-163 / DSM 7039 / HB27).